Consider the following 307-residue polypeptide: 2-haloacid dehalogenase, configuration-inverting (307 aa).

It belongs to the HAD-like hydrolase superfamily. S-2-haloalkanoic acid dehalogenase family. Homodimer.

It carries out the reaction an (S)-2-haloacid + H2O = a (2R)-2-hydroxycarboxylate + a halide anion + H(+). The catalysed reaction is an (R)-2-haloacid + H2O = a (2S)-2-hydroxycarboxylate + a halide anion + H(+). Its function is as follows. Dehalogenates both (S)- and (R)-2-haloalkanoic acids to the corresponding (R)- and (S)-hydroxyalkanoic acids, respectively, with inversion of configuration at C-2. Acts on 2-haloalkanoic acids whose carbon chain lengths are five or less. The sequence is that of 2-haloacid dehalogenase, configuration-inverting from Pseudomonas sp. (strain 113).